The following is a 197-amino-acid chain: Glycerol-3-phosphate acyltransferase (197 aa).

5 helical membrane-spanning segments follow: residues 6-26 (LFIV…AIIV), 58-78 (AITL…AHYL), 82-102 (MLNV…PIFF), 116-136 (ALLA…VFVA), and 157-177 (FYLI…CLWI).

Belongs to the PlsY family. In terms of assembly, probably interacts with PlsX.

Its subcellular location is the cell inner membrane. The catalysed reaction is an acyl phosphate + sn-glycerol 3-phosphate = a 1-acyl-sn-glycero-3-phosphate + phosphate. It functions in the pathway lipid metabolism; phospholipid metabolism. Catalyzes the transfer of an acyl group from acyl-phosphate (acyl-PO(4)) to glycerol-3-phosphate (G3P) to form lysophosphatidic acid (LPA). This enzyme utilizes acyl-phosphate as fatty acyl donor, but not acyl-CoA or acyl-ACP. This Ruthia magnifica subsp. Calyptogena magnifica protein is Glycerol-3-phosphate acyltransferase.